Consider the following 383-residue polypeptide: Neuropeptide Y receptor type 1 (383 aa).

Residues 1–44 (MNSTLSSQVENHSIYYNFSEKNSQFLAFENDDCHLPLAMIFTLA) are Extracellular-facing. 3 N-linked (GlcNAc...) asparagine glycosylation sites follow: Asn2, Asn11, and Asn17. The helical transmembrane segment at 45–65 (LAYGAVIILGVSGNLALIIII) threads the bilayer. The Cytoplasmic portion of the chain corresponds to 66-76 (LKQKEMRNVTN). The helical transmembrane segment at 77–97 (ILIVNLSFSDLLVAIMCLPFT) threads the bilayer. Over 98–116 (FVYTLMDHWVFGEVMCKLN) the chain is Extracellular. A disulfide bridge links Cys113 with Cys198. A helical membrane pass occupies residues 117–137 (PFVQCVSITVSIFSLVLIAVE). Over 138–154 (RHQLIINPRGWRPSNRH) the chain is Cytoplasmic. The chain crosses the membrane as a helical span at residues 155–175 (AYVGIAVIWVLAVASSLPFLI). At 176–211 (YQVLTDEPFQNVTLDAFKDKYVCFDKFLSDSHRLSY) the chain is on the extracellular side. Residues 212–232 (TTLLLVLQYFGPLCFIFICYF) form a helical membrane-spanning segment. Topologically, residues 233–260 (KIYIRLKRRNNMMDKMRDNKYRSSETKR) are cytoplasmic. A helical membrane pass occupies residues 261-281 (INVMLLSIVVAFAVCWLPLTI). At 282–299 (FNTVFDWNHQIIATCNHN) the chain is on the extracellular side. The chain crosses the membrane as a helical span at residues 300–320 (LLFLLCHLTAMISTCINPIFY). The Cytoplasmic segment spans residues 321 to 383 (GFLNKNFQRD…KIHSDDNEKI (63 aa)). Residue Cys338 is the site of S-palmitoyl cysteine attachment. Ser368 is modified (phosphoserine).

The protein belongs to the G-protein coupled receptor 1 family.

It is found in the cell membrane. Functionally, receptor for neuropeptide Y and peptide YY. This is Neuropeptide Y receptor type 1 (NPY1R) from Sus scrofa (Pig).